We begin with the raw amino-acid sequence, 309 residues long: MGSKSKILIIGGTGYIGKFIVEASVKEGHPTFALVRETTVSDPVKGKLVEKFQNLGVSLLYGDLYDHDSLVKAIKQVDVVISTVGFMQIADQTKIIAAIKEAGNVKRFFPSEFGNDVDHVNAVEPAKSVAFAVKANIRRAVEAEGIPYTYVASNCFNGYFLPTLVQPGATTPPRDKVIIPGDGNPKAIFNKEEDIGTYTIKAVDDPRTLNKILYLRPSNNIYSFNELVALWEKKIGKTLEKIYVPEEQILKDIQEAPIPINIFLGINHSVFVKGDHTNFEIEPSFGVEASELYPEVKYTTVEEYLDQFV.

NADP(+) contacts are provided by residues 13 to 16, 35 to 45, arginine 36, 86 to 88, 111 to 113, lysine 134, and 154 to 156; these read TGYI, VRETTVSDPVK, FMQ, SEF, and NCF. The active-site Proton donor/acceptor is lysine 134.

Belongs to the NmrA-type oxidoreductase family. As to expression, mostly expressed in petals, and, to a lower extent, in sepals, stamens and pistils.

It carries out the reaction eugenol + a carboxylate + NADP(+) = a coniferyl ester + NADPH. The catalysed reaction is eugenol + acetate + NADP(+) = (E)-coniferyl acetate + NADPH. It functions in the pathway aromatic compound metabolism; phenylpropanoid biosynthesis. Catalyzes the synthesis of the phenylpropene eugenol from coniferyl acetate. Phenylpropenes are produced by plants as defense compounds with antimicrobial and antianimal properties, or as floral attractants of pollinators. This is Eugenol synthase 2 from Clarkia breweri (Fairy fans).